The primary structure comprises 366 residues: Outer membrane porin C 2 (366 aa).

The signal sequence occupies residues 1-21; that stretch reads MKLKIVAVVVTGLLAANVAHA.

This sequence belongs to the Gram-negative porin family. Homotrimer. Forms mixed heterotrimers with OmpF and with PhoE; other mixed heterotrimers are also probable.

The protein localises to the cell outer membrane. Forms pores that allow passive diffusion of small molecules across the outer membrane. Plays a role in virulence. The protein is Outer membrane porin C 2 of Shigella flexneri serotype 5a (strain M90T).